We begin with the raw amino-acid sequence, 320 residues long: Mitochondrial thiamine pyrophosphate carrier 1 (320 aa).

Solcar repeat units follow at residues 12 to 110, 119 to 205, and 213 to 308; these read GTRR…TTQA, PQPV…LRPS, and PFGS…TLRA. 6 consecutive transmembrane segments (helical) span residues 17 to 35, 91 to 107, 125 to 145, 180 to 197, 219 to 239, and 283 to 300; these read VVLAGGIAGLVSRFCVAPL, LMYVCYGGVQFTTYRTT, FVAGASAGGLATAATYPLDLL, GCSAAVGQIVPYMGLFFA, ALAGMIASVLAKTGVFPLDLV, and GLTVSLFKAAPASAVTMW.

Belongs to the mitochondrial carrier (TC 2.A.29) family.

It localises to the mitochondrion inner membrane. In terms of biological role, mitochondrial transporter that mediates uptake of thiamine pyrophosphate (ThPP) into mitochondria. The protein is Mitochondrial thiamine pyrophosphate carrier 1 (tpc1) of Aspergillus terreus (strain NIH 2624 / FGSC A1156).